Here is a 554-residue protein sequence, read N- to C-terminus: Solute carrier family 22 member 2 (554 aa).

Over 1–21 the chain is Cytoplasmic; the sequence is MPTVDDILEQVGHFHFFQKQT. A helical membrane pass occupies residues 22–42; sequence FFLLALISAAFTPIYVGIVFL. Over 43–149 the chain is Extracellular; sequence GFTPDHRCRS…LVCARSWMLD (107 aa). An N-linked (GlcNAc...) asparagine glycan is attached at N71. A helical membrane pass occupies residues 150 to 170; that stretch reads LFQSAVNIGFFIGSVGIGYLA. Topologically, residues 171–176 are cytoplasmic; sequence DRFGRK. The helical transmembrane segment at 177–197 threads the bilayer; the sequence is LCLLVTILINAAAGVLMAVSP. N-linked (GlcNAc...) asparagine glycosylation is present at N198. Residues 198-209 are Extracellular-facing; the sequence is NYTWMLIFRLIQ. Residues 210-230 form a helical membrane-spanning segment; that stretch reads GLVSKAGWLIGYILITEFVGL. The Cytoplasmic segment spans residues 231 to 237; it reads NYRRTVG. A helical transmembrane segment spans residues 238 to 258; it reads ILYQVAFTVGLLVLAGVAYAL. Over 259 to 262 the chain is Extracellular; sequence PRWR. The helical transmembrane segment at 263-283 threads the bilayer; the sequence is WLQLTVTLPYFCFLLYYWCIP. The Proline-rich sequence motif lies at 283–287; that stretch reads PESPR. At 284-348 the chain is on the cytoplasmic side; it reads ESPRWLISQN…RTPQIRKHTC (65 aa). The chain crosses the membrane as a helical span at residues 349-369; the sequence is ILMYNWFTSSVLYQGLIMHLG. The Extracellular segment spans residues 370 to 374; that stretch reads LAGGD. Residues 375 to 395 form a helical membrane-spanning segment; sequence IYLDFFYSALVEFPAAFLIIA. Residues 396-403 lie on the Cytoplasmic side of the membrane; sequence TIDRVGRR. Residues 404–424 traverse the membrane as a helical segment; it reads YPWAVSNMVAGAACLASVFVP. At 425 to 427 the chain is on the extracellular side; the sequence is DDL. The chain crosses the membrane as a helical span at residues 428-450; the sequence is QGLRITVACLGRMGITMAYEMVC. Topologically, residues 451–463 are cytoplasmic; the sequence is LVNAELYPTFIRN. A helical membrane pass occupies residues 464–484; the sequence is LGVLVCSSLCDVGGIVTPFLV. The Extracellular segment spans residues 485 to 493; the sequence is YRLTAIWLQ. A helical transmembrane segment spans residues 494-514; sequence LPLVVFAVVGLVAGGLVLMLP. The Cytoplasmic segment spans residues 515–554; the sequence is ETKGRTLPETIEEAENLQRPRKNREKVIYVHVRKADGPLT.

Belongs to the major facilitator (TC 2.A.1) superfamily. Organic cation transporter (TC 2.A.1.19) family. Tyrosine phosphorylated. Expressed in kidney.

It is found in the basolateral cell membrane. It localises to the basal cell membrane. It catalyses the reaction (R)-noradrenaline(out) = (R)-noradrenaline(in). The catalysed reaction is (R)-adrenaline(out) = (R)-adrenaline(in). The enzyme catalyses serotonin(out) = serotonin(in). It carries out the reaction dopamine(out) = dopamine(in). It catalyses the reaction histamine(out) = histamine(in). The catalysed reaction is thiamine(in) = thiamine(out). The enzyme catalyses creatinine(in) = creatinine(out). It carries out the reaction 1-methylnicotinamide(out) = 1-methylnicotinamide(in). It catalyses the reaction guanidine(out) = guanidine(in). The catalysed reaction is choline(out) = choline(in). The enzyme catalyses agmatine(out) = agmatine(in). It carries out the reaction putrescine(out) = putrescine(in). It catalyses the reaction spermidine(in) = spermidine(out). The catalysed reaction is tyramine(in) = tyramine(out). The enzyme catalyses L-histidyl-L-proline diketopiperazine(in) = L-histidyl-L-proline diketopiperazine(out). It carries out the reaction (R)-salsolinol(in) = (R)-salsolinol(out). It catalyses the reaction N-methyl-(R)-salsolinol(in) = N-methyl-(R)-salsolinol(out). The catalysed reaction is acetylcholine(in) = acetylcholine(out). The enzyme catalyses prostaglandin F2alpha(out) = prostaglandin F2alpha(in). It carries out the reaction prostaglandin E2(out) = prostaglandin E2(in). Its activity is regulated as follows. Tyrosine phosphorylation of the transporter leads to activation of the transport activity. Inhibited by cGMP, most likely through a cGMP-binding protein that interacts with OCT2. Functionally, electrogenic voltage-dependent transporter that mediates the transport of a variety of organic cations such as endogenous bioactive amines, cationic drugs and xenobiotics. Functions as a Na(+)-independent, bidirectional uniporter. Cation cellular uptake or release is driven by the electrochemical potential, i.e. membrane potential and concentration gradient. However, may also engage electroneutral cation exchange when saturating concentrations of cation substrates are reached. Predominantly expressed at the basolateral membrane of hepatocytes and proximal tubules and involved in the uptake and disposition of cationic compounds by hepatic and renal clearance from the blood flow. Implicated in monoamine neurotransmitters uptake such as histamine, dopamine, adrenaline/epinephrine, noradrenaline/norepinephrine, serotonin and tyramine, thereby supporting a physiological role in the central nervous system by regulating interstitial concentrations of neurotransmitters. Also capable of transporting dopaminergic neuromodulators cyclo(his-pro), salsolinol and N-methyl-salsolinol, thereby involved in the maintenance of dopaminergic cell integrity in the central nervous system. Mediates the bidirectional transport of acetylcholine (ACh) at the apical membrane of ciliated cell in airway epithelium, thereby playing a role in luminal release of ACh from bronchial epithelium. Also transports guanidine and endogenous monoamines such as vitamin B1/thiamine, creatinine and N-1-methylnicotinamide (NMN). Mediates the uptake and efflux of quaternary ammonium compound choline. Mediates the bidirectional transport of polyamine agmatine and the uptake of polyamines putrescine and spermidine. Able to transport non-amine endogenous compounds such as prostaglandin E2 (PGE2) and prostaglandin F2-alpha (PGF2-alpha). Also involved in the uptake of xenobiotic 4-(4-(dimethylamino)styryl)-N-methylpyridinium (ASP). May contribute to regulate the transport of organic compounds in testis across the blood-testis-barrier. This chain is Solute carrier family 22 member 2 (SLC22A2), found in Oryctolagus cuniculus (Rabbit).